Consider the following 262-residue polypeptide: Apolipoprotein A-Ia (262 aa).

The signal sequence occupies residues 1 to 18 (MKFVALALTLLLALGSQA). The interval 32–63 (YKAAALVYLNQVKDQAEKALDNLDGTDYEQYK) is 3 X approximate tandem repeats. 2 tandem repeats follow at residues 64 to 85 (LQLS…QALT) and 87 to 107 (YAET…ERVM). A 10 X approximate tandem repeats region spans residues 64 to 262 (LQLSESLTKL…YETIAKAIQA (199 aa)). One copy of the 3; half-length repeat lies at 108–118 (TDVEDLRSKLE). Repeat copies occupy residues 119–140 (PHRA…EKLE), 141–162 (PVFQ…AKLE), 163–184 (PLMD…SKVV), 185–206 (PMVE…TMAA), and 207–228 (PYAE…EKIA). The stretch at 229-239 (PHTQDLQTRME) is one 9; half-length repeat. Repeat unit 10 spans residues 240–262 (PYMENVRTTFAQMYETIAKAIQA).

Belongs to the apolipoprotein A1/A4/E family. In terms of assembly, homodimer. Interacts with naxe and yjefn3.

Its subcellular location is the secreted. Its function is as follows. Participates in the reverse transport of cholesterol from tissues to the liver for excretion by promoting cholesterol efflux from tissues and by acting as a cofactor for the lecithin cholesterol acyltransferase (LCAT). The polypeptide is Apolipoprotein A-Ia (Danio rerio (Zebrafish)).